Reading from the N-terminus, the 360-residue chain is Phospho-N-acetylmuramoyl-pentapeptide-transferase (360 aa).

The next 10 membrane-spanning stretches (helical) occupy residues 26–46, 74–94, 97–117, 134–154, 168–188, 199–219, 236–256, 263–283, 288–308, and 338–358; these read AILG…KLIE, MGGL…GDLG, YVWV…IDDY, YILQ…TAAN, VMPQ…VGAS, GLAI…AYLS, SGEL…FLWF, VFMG…IAVL, ILLV…ILQV, and VIVR…ATLK.

This sequence belongs to the glycosyltransferase 4 family. MraY subfamily. It depends on Mg(2+) as a cofactor.

The protein resides in the cell inner membrane. The enzyme catalyses UDP-N-acetyl-alpha-D-muramoyl-L-alanyl-gamma-D-glutamyl-meso-2,6-diaminopimeloyl-D-alanyl-D-alanine + di-trans,octa-cis-undecaprenyl phosphate = di-trans,octa-cis-undecaprenyl diphospho-N-acetyl-alpha-D-muramoyl-L-alanyl-D-glutamyl-meso-2,6-diaminopimeloyl-D-alanyl-D-alanine + UMP. It functions in the pathway cell wall biogenesis; peptidoglycan biosynthesis. In terms of biological role, catalyzes the initial step of the lipid cycle reactions in the biosynthesis of the cell wall peptidoglycan: transfers peptidoglycan precursor phospho-MurNAc-pentapeptide from UDP-MurNAc-pentapeptide onto the lipid carrier undecaprenyl phosphate, yielding undecaprenyl-pyrophosphoryl-MurNAc-pentapeptide, known as lipid I. The chain is Phospho-N-acetylmuramoyl-pentapeptide-transferase from Shewanella baltica (strain OS185).